A 360-amino-acid chain; its full sequence is tRNA pseudouridine synthase D (360 aa).

Asp-76 (nucleophile) is an active-site residue. A TRUD domain is found at 151 to 332 (GMPNFFGYQR…HGIYKEKNAW (182 aa)).

This sequence belongs to the pseudouridine synthase TruD family.

The catalysed reaction is uridine(13) in tRNA = pseudouridine(13) in tRNA. Responsible for synthesis of pseudouridine from uracil-13 in transfer RNAs. The polypeptide is tRNA pseudouridine synthase D (Nitratiruptor sp. (strain SB155-2)).